Consider the following 39-residue polypeptide: Mating pheromone Er-11 (39 aa).

Intrachain disulfides connect cysteine 3–cysteine 19, cysteine 10–cysteine 34, and cysteine 15–cysteine 26.

In terms of assembly, homodimer.

The protein resides in the secreted. Mating ciliate pheromones (or gamones) are diffusible extracellular communication signals that distinguish different intraspecific classes of cells commonly referred to as 'mating types'. They prepare the latter for conjugation by changing their cell surface properties. The polypeptide is Mating pheromone Er-11 (MAT11) (Euplotes raikovi).